The primary structure comprises 44 residues: Cytochrome b559 subunit beta (44 aa).

Residues 19–35 traverse the membrane as a helical segment; it reads WLAIHGLAIPTVFFLGA. Position 23 (His23) interacts with heme.

Belongs to the PsbE/PsbF family. Heterodimer of an alpha subunit and a beta subunit. PSII is composed of 1 copy each of membrane proteins PsbA, PsbB, PsbC, PsbD, PsbE, PsbF, PsbH, PsbI, PsbJ, PsbK, PsbL, PsbM, PsbT, PsbX, PsbY, PsbZ, Psb30/Ycf12, at least 3 peripheral proteins of the oxygen-evolving complex and a large number of cofactors. It forms dimeric complexes. Requires heme b as cofactor.

Its subcellular location is the plastid. It localises to the chloroplast thylakoid membrane. Functionally, this b-type cytochrome is tightly associated with the reaction center of photosystem II (PSII). PSII is a light-driven water:plastoquinone oxidoreductase that uses light energy to abstract electrons from H(2)O, generating O(2) and a proton gradient subsequently used for ATP formation. It consists of a core antenna complex that captures photons, and an electron transfer chain that converts photonic excitation into a charge separation. This is Cytochrome b559 subunit beta from Porphyra purpurea (Red seaweed).